The chain runs to 97 residues: Co-chaperonin GroES (97 aa).

Belongs to the GroES chaperonin family. Heptamer of 7 subunits arranged in a ring. Interacts with the chaperonin GroEL.

It is found in the cytoplasm. Functionally, together with the chaperonin GroEL, plays an essential role in assisting protein folding. The GroEL-GroES system forms a nano-cage that allows encapsulation of the non-native substrate proteins and provides a physical environment optimized to promote and accelerate protein folding. GroES binds to the apical surface of the GroEL ring, thereby capping the opening of the GroEL channel. The protein is Co-chaperonin GroES of Oleispira antarctica.